The sequence spans 337 residues: MNLTDNAVIFVKGGNGGKGCVSFRREKYIPKGGPDGGNGGNGGNVWIYSDKNTHDLYHCLVRKNFIAEDGENGKKNNSSGKNGKDVIIKVPIGTNIFFIKNSENIIFGHTRFHNQKFLVAKGGVRGLGNNYFKSPTNRTPMESTLGKLGESFKIKLDFVFLADVGLFGYSNTGRSCFMRSISNVKPKISFYPFTTLFPYIGSLNFLNKDIKFVDIPSFIEGKKKNNLRNRFLKHLQNCRLLLHFINLDVKNVKKTINKEKINIKILKSFRNLFLKPIWLIINKTDININSNIFFKQAQFVSNSLGYEKKFFFISLNDFISIKILINKILLFLEENKR.

The Obg domain occupies 1 to 161 (MNLTDNAVIF…FKIKLDFVFL (161 aa)). The OBG-type G domain occupies 162–333 (ADVGLFGYSN…LINKILLFLE (172 aa)). Residues 168–175 (GYSNTGRS), 193–197 (FTTLF), 214–217 (DIPS), 282–285 (NKTD), and 314–316 (SLN) each bind GTP. Mg(2+) is bound by residues serine 175 and threonine 195.

This sequence belongs to the TRAFAC class OBG-HflX-like GTPase superfamily. OBG GTPase family. Monomer. Mg(2+) serves as cofactor.

The protein resides in the cytoplasm. In terms of biological role, an essential GTPase which binds GTP, GDP and possibly (p)ppGpp with moderate affinity, with high nucleotide exchange rates and a fairly low GTP hydrolysis rate. Plays a role in control of the cell cycle, stress response, ribosome biogenesis and in those bacteria that undergo differentiation, in morphogenesis control. This is GTPase Obg from Wigglesworthia glossinidia brevipalpis.